The sequence spans 558 residues: Formate--tetrahydrofolate ligase (558 aa).

66 to 73 (TPAGEGKT) serves as a coordination point for ATP.

This sequence belongs to the formate--tetrahydrofolate ligase family.

The enzyme catalyses (6S)-5,6,7,8-tetrahydrofolate + formate + ATP = (6R)-10-formyltetrahydrofolate + ADP + phosphate. It participates in one-carbon metabolism; tetrahydrofolate interconversion. The polypeptide is Formate--tetrahydrofolate ligase (Neisseria meningitidis serogroup C / serotype 2a (strain ATCC 700532 / DSM 15464 / FAM18)).